Reading from the N-terminus, the 100-residue chain is UPF0298 protein lp_2135 (100 aa).

It belongs to the UPF0298 family.

The protein localises to the cytoplasm. The polypeptide is UPF0298 protein lp_2135 (Lactiplantibacillus plantarum (strain ATCC BAA-793 / NCIMB 8826 / WCFS1) (Lactobacillus plantarum)).